Consider the following 142-residue polypeptide: Large ribosomal subunit protein uL11 (142 aa).

The protein belongs to the universal ribosomal protein uL11 family. Part of the ribosomal stalk of the 50S ribosomal subunit. Interacts with L10 and the large rRNA to form the base of the stalk. L10 forms an elongated spine to which L12 dimers bind in a sequential fashion forming a multimeric L10(L12)X complex. One or more lysine residues are methylated.

Forms part of the ribosomal stalk which helps the ribosome interact with GTP-bound translation factors. The chain is Large ribosomal subunit protein uL11 from Serratia proteamaculans (strain 568).